The following is a 276-amino-acid chain: Large ribosomal subunit protein uL2 (276 aa).

Disordered stretches follow at residues 1–20 (MGIKKYNPTTNGRRNMTTND) and 219–276 (TVRG…RRKK). A compositionally biased stretch (polar residues) spans 7 to 20 (NPTTNGRRNMTTND).

The protein belongs to the universal ribosomal protein uL2 family. As to quaternary structure, part of the 50S ribosomal subunit. Forms a bridge to the 30S subunit in the 70S ribosome.

Its function is as follows. One of the primary rRNA binding proteins. Required for association of the 30S and 50S subunits to form the 70S ribosome, for tRNA binding and peptide bond formation. It has been suggested to have peptidyltransferase activity; this is somewhat controversial. Makes several contacts with the 16S rRNA in the 70S ribosome. This chain is Large ribosomal subunit protein uL2, found in Bacillus anthracis (strain A0248).